A 408-amino-acid polypeptide reads, in one-letter code: Multidrug resistance protein MdtG (408 aa).

11 helical membrane-spanning segments follow: residues 16–36, 58–78, 92–112, 115–135, 146–166, 173–193, 224–244, 256–276, 290–310, 319–339, and 378–398; these read LIVA…VMPF, IVFS…GGLA, LGMG…QFLI, ALLG…ATQV, TLST…GLLA, PVFF…LFCI, LFVT…ILTL, VAFI…LSAP, ILIT…YVQT, FLLG…LVYN, and AVFL…WNSL.

It belongs to the major facilitator superfamily. DHA1 family. MdtG (TC 2.A.1.2.20) subfamily.

It localises to the cell inner membrane. Confers resistance to fosfomycin and deoxycholate. The chain is Multidrug resistance protein MdtG from Escherichia coli O81 (strain ED1a).